The sequence spans 155 residues: Small ribosomal subunit protein uS7c (155 aa).

Belongs to the universal ribosomal protein uS7 family. In terms of assembly, part of the 30S ribosomal subunit.

It is found in the plastid. Its subcellular location is the chloroplast. Functionally, one of the primary rRNA binding proteins, it binds directly to 16S rRNA where it nucleates assembly of the head domain of the 30S subunit. This chain is Small ribosomal subunit protein uS7c (rps7), found in Schisandra chinensis (Chinese magnolia vine).